The primary structure comprises 153 residues: Large ribosomal subunit protein bL9 (153 aa).

The protein belongs to the bacterial ribosomal protein bL9 family.

Binds to the 23S rRNA. The sequence is that of Large ribosomal subunit protein bL9 from Gloeobacter violaceus (strain ATCC 29082 / PCC 7421).